A 389-amino-acid polypeptide reads, in one-letter code: MRIFKTNVLLRFVNSYIIDSPQPANLSYLWNFGSLLALCLIIQILTGCFLAMHYIPNVDLAFDSIEHIMRDVDNGYILRYTHANVASFFFIFIYVHIGRGLWYGSYRAPRVLLWSIGVIILVLMMAIGFLGYVLPFGQMSLWGATVITNLLSAIPIFGQDIVELIWGGFSVSNATLNRFFSLHYILPFVLAALAVAHMIALHTHGSSNPNGLTSNGDRYAMYPYFIFKDLVTIFAFFLVLSIIVFFYPNLMGHSDNYIPANPMVTPSSIVPEWYLLPFYAILRSIPNKLLGVLAMFGSLLILLIMPFVDFSRTRGNKTLNPINMVFFTIFVCNFITLGLVGANHATEPFIFLGQVCTTIYFAYFFVIVPVTSILQNTFLDIATIINKSA.

The next 4 helical transmembrane spans lie at 32–52 (FGSL…FLAM), 76–98 (YILR…VHIG), 113–133 (LWSI…LGYV), and 179–199 (FFSL…AHMI). Positions 82 and 96 each coordinate heme b. Heme b is bound by residues H183 and H197. A ubiquinone is bound at residue H202. A run of 4 helical transmembrane segments spans residues 225 to 245 (FIFK…IIVF), 289 to 309 (LLGV…PFVD), 322 to 342 (INMV…LVGA), and 349 to 369 (FIFL…VIVP).

Belongs to the cytochrome b family. Fungal cytochrome b-c1 complex contains 10 subunits; 3 respiratory subunits, 2 core proteins and 5 low-molecular weight proteins. Cytochrome b-c1 complex is a homodimer. Heme b serves as cofactor.

It localises to the mitochondrion inner membrane. Functionally, component of the ubiquinol-cytochrome c reductase complex (complex III or cytochrome b-c1 complex) that is part of the mitochondrial respiratory chain. The b-c1 complex mediates electron transfer from ubiquinol to cytochrome c. Contributes to the generation of a proton gradient across the mitochondrial membrane that is then used for ATP synthesis. The chain is Cytochrome b (COB) from Mycena viridimarginata.